A 310-amino-acid polypeptide reads, in one-letter code: ATP-dependent protease (310 aa).

The 163-residue stretch at 24-186 folds into the Integrase catalytic domain; that stretch reads RLNQCFFKFK…TPNQKEENYF (163 aa).

The sequence is that of ATP-dependent protease from Lactococcus lactis subsp. lactis (Streptococcus lactis).